The primary structure comprises 120 residues: Ribonuclease P protein component (120 aa).

It belongs to the RnpA family. In terms of assembly, consists of a catalytic RNA component (M1 or rnpB) and a protein subunit.

The enzyme catalyses Endonucleolytic cleavage of RNA, removing 5'-extranucleotides from tRNA precursor.. Functionally, RNaseP catalyzes the removal of the 5'-leader sequence from pre-tRNA to produce the mature 5'-terminus. It can also cleave other RNA substrates such as 4.5S RNA. The protein component plays an auxiliary but essential role in vivo by binding to the 5'-leader sequence and broadening the substrate specificity of the ribozyme. The protein is Ribonuclease P protein component of Dictyoglomus thermophilum (strain ATCC 35947 / DSM 3960 / H-6-12).